The following is a 96-amino-acid chain: ESAT-6-like protein EsxR (96 aa).

This sequence belongs to the WXG100 family. ESAT-6 subfamily.

The protein localises to the secreted. This chain is ESAT-6-like protein EsxR, found in Mycobacterium bovis (strain ATCC BAA-935 / AF2122/97).